The chain runs to 65 residues: UPF0434 protein CPS_2127 (65 aa).

The protein belongs to the UPF0434 family.

The polypeptide is UPF0434 protein CPS_2127 (Colwellia psychrerythraea (strain 34H / ATCC BAA-681) (Vibrio psychroerythus)).